The primary structure comprises 357 residues: MTLWVVKIGTSLLRGETATTIDGYARCFAGAMDRGDQVVLVTSGAVGLGCQKLALTNRPDTVVALQAAAAIGQGALMGLYERAMARHGRSVAQVLLTRSDLADRRRYQNASGTLRQLLSWGVLPVINENDALSPAELRFGDNDTLSALVAAAVEAQQLILLTDVDRLYSSDPRVDANAEPISDIRHPRELDSLEQGAGDGGRWGTGGMTTKLAAARIATASGITVQLADGRDPARLEALLQGQRGGTVFHPHPEPLGNRRSWLAHVLRPEGELQLDAGACAALQHRGASLLLVGVTAVRGDFAANQPIQLLDPDGEDLGRGLCSMDSDQLRAAMNDPSPGESSPVVVHRDGLVLRSR.

Residue K7 coordinates ATP. Residues S43, D130, and N142 each coordinate substrate. ATP contacts are provided by residues 162-163 (TD) and 205-211 (TGGMTTK). One can recognise a PUA domain in the interval 270 to 353 (EGELQLDAGA…PVVVHRDGLV (84 aa)).

This sequence belongs to the glutamate 5-kinase family.

Its subcellular location is the cytoplasm. It catalyses the reaction L-glutamate + ATP = L-glutamyl 5-phosphate + ADP. Its pathway is amino-acid biosynthesis; L-proline biosynthesis; L-glutamate 5-semialdehyde from L-glutamate: step 1/2. In terms of biological role, catalyzes the transfer of a phosphate group to glutamate to form L-glutamate 5-phosphate. The polypeptide is Glutamate 5-kinase (Synechococcus sp. (strain CC9605)).